Here is a 562-residue protein sequence, read N- to C-terminus: 3-(3-hydroxy-phenyl)propionate/3-hydroxycinnamic acid hydroxylase (562 aa).

FAD is bound by residues 8 to 37 (DVVI…IIEE) and 275 to 285 (FRKGRMLLAGD).

Belongs to the PheA/TfdB FAD monooxygenase family. FAD is required as a cofactor.

The catalysed reaction is 3-(3-hydroxyphenyl)propanoate + NADH + O2 + H(+) = 3-(2,3-dihydroxyphenyl)propanoate + NAD(+) + H2O. The enzyme catalyses (2E)-3-(3-hydroxyphenyl)prop-2-enoate + NADH + O2 + H(+) = (2E)-3-(2,3-dihydroxyphenyl)prop-2-enoate + NAD(+) + H2O. It functions in the pathway aromatic compound metabolism; 3-phenylpropanoate degradation. Functionally, catalyzes the insertion of one atom of molecular oxygen into position 2 of the phenyl ring of 3-(3-hydroxyphenyl)propionate (3-HPP) and hydroxycinnamic acid (3HCI). This Mycolicibacterium smegmatis (strain ATCC 700084 / mc(2)155) (Mycobacterium smegmatis) protein is 3-(3-hydroxy-phenyl)propionate/3-hydroxycinnamic acid hydroxylase.